The sequence spans 136 residues: Acyl carrier protein 2, chloroplastic (136 aa).

The transit peptide at 1–51 directs the protein to the chloroplast; sequence MASIAASASISLQARPRQLAIAASQVKSFSNGRRSSLSFNLRQLPTRLTVS. The Carrier domain maps to 56-131; sequence PETVDKVCAV…QAAALIEELL (76 aa). Position 91 is an O-(pantetheine 4'-phosphoryl)serine (S91).

The protein belongs to the acyl carrier protein (ACP) family. Post-translationally, 4'-phosphopantetheine is transferred from CoA to a specific serine of apo-ACP by acpS. This modification is essential for activity because fatty acids are bound in thioester linkage to the sulfhydryl of the prosthetic group.

It localises to the plastid. The protein localises to the chloroplast. Functionally, carrier of the growing fatty acid chain in fatty acid biosynthesis. The chain is Acyl carrier protein 2, chloroplastic (ACP2) from Arabidopsis thaliana (Mouse-ear cress).